Consider the following 92-residue polypeptide: Protein S100-A5 (92 aa).

EF-hand domains are found at residues 12–47 (MVTT…LGEM) and 47–82 (MKES…LCMA). Ca(2+)-binding residues include T28, E33, D60, N62, D64, E66, and E71.

Belongs to the S-100 family. Homodimer.

Functionally, binds calcium, zinc and copper. One subunit can simultaneously bind 2 calcium ions or 2 copper ions plus 1 zinc ion. Calcium and copper ions compete for the same binding sites. The chain is Protein S100-A5 (S100A5) from Homo sapiens (Human).